The primary structure comprises 300 residues: UDP-N-acetylenolpyruvoylglucosamine reductase (300 aa).

Positions lysine 27 to glycine 192 constitute an FAD-binding PCMH-type domain. The active site involves arginine 171. Catalysis depends on serine 221, which acts as the Proton donor. Residue glutamate 291 is part of the active site.

It belongs to the MurB family. FAD serves as cofactor.

The protein localises to the cytoplasm. It catalyses the reaction UDP-N-acetyl-alpha-D-muramate + NADP(+) = UDP-N-acetyl-3-O-(1-carboxyvinyl)-alpha-D-glucosamine + NADPH + H(+). It participates in cell wall biogenesis; peptidoglycan biosynthesis. Functionally, cell wall formation. The protein is UDP-N-acetylenolpyruvoylglucosamine reductase of Streptococcus agalactiae serotype Ia (strain ATCC 27591 / A909 / CDC SS700).